The sequence spans 108 residues: Protein translation factor SUI1 (108 aa).

The interval 1 to 20 (MSIENLKSFDPFADTGDDEA) is disordered.

The protein belongs to the SUI1 family.

Its function is as follows. Additional factor that functions in concert with eIF-2 and the initiator tRNA in directing the ribosome to the proper start site of translation. The sequence is that of Protein translation factor SUI1 (SUI1A) from Eremothecium gossypii (strain ATCC 10895 / CBS 109.51 / FGSC 9923 / NRRL Y-1056) (Yeast).